The primary structure comprises 334 residues: Holliday junction branch migration complex subunit RuvB (334 aa).

Residues 4–184 (ADRLIQPQLQ…FGIPLRLEFY (181 aa)) form a large ATPase domain (RuvB-L) region. Residues R24, G65, K68, T69, T70, 131 to 133 (EDY), R174, Y184, and R221 contribute to the ATP site. T69 is a Mg(2+) binding site. Positions 185-255 (NVKDLSTIVT…VAELALNLLD (71 aa)) are small ATPAse domain (RuvB-S). A head domain (RuvB-H) region spans residues 258 to 334 (GEGFDYMDRK…YVHFGMIKPE (77 aa)). 3 residues coordinate DNA: R294, R313, and R318.

The protein belongs to the RuvB family. In terms of assembly, homohexamer. Forms an RuvA(8)-RuvB(12)-Holliday junction (HJ) complex. HJ DNA is sandwiched between 2 RuvA tetramers; dsDNA enters through RuvA and exits via RuvB. An RuvB hexamer assembles on each DNA strand where it exits the tetramer. Each RuvB hexamer is contacted by two RuvA subunits (via domain III) on 2 adjacent RuvB subunits; this complex drives branch migration. In the full resolvosome a probable DNA-RuvA(4)-RuvB(12)-RuvC(2) complex forms which resolves the HJ.

The protein resides in the cytoplasm. The enzyme catalyses ATP + H2O = ADP + phosphate + H(+). The RuvA-RuvB-RuvC complex processes Holliday junction (HJ) DNA during genetic recombination and DNA repair, while the RuvA-RuvB complex plays an important role in the rescue of blocked DNA replication forks via replication fork reversal (RFR). RuvA specifically binds to HJ cruciform DNA, conferring on it an open structure. The RuvB hexamer acts as an ATP-dependent pump, pulling dsDNA into and through the RuvAB complex. RuvB forms 2 homohexamers on either side of HJ DNA bound by 1 or 2 RuvA tetramers; 4 subunits per hexamer contact DNA at a time. Coordinated motions by a converter formed by DNA-disengaged RuvB subunits stimulates ATP hydrolysis and nucleotide exchange. Immobilization of the converter enables RuvB to convert the ATP-contained energy into a lever motion, pulling 2 nucleotides of DNA out of the RuvA tetramer per ATP hydrolyzed, thus driving DNA branch migration. The RuvB motors rotate together with the DNA substrate, which together with the progressing nucleotide cycle form the mechanistic basis for DNA recombination by continuous HJ branch migration. Branch migration allows RuvC to scan DNA until it finds its consensus sequence, where it cleaves and resolves cruciform DNA. The sequence is that of Holliday junction branch migration complex subunit RuvB from Shewanella oneidensis (strain ATCC 700550 / JCM 31522 / CIP 106686 / LMG 19005 / NCIMB 14063 / MR-1).